The sequence spans 304 residues: tRNA pseudouridine synthase B (304 aa).

The active-site Nucleophile is the Asp48.

This sequence belongs to the pseudouridine synthase TruB family. Type 1 subfamily.

The enzyme catalyses uridine(55) in tRNA = pseudouridine(55) in tRNA. Functionally, responsible for synthesis of pseudouridine from uracil-55 in the psi GC loop of transfer RNAs. The chain is tRNA pseudouridine synthase B from Pseudomonas aeruginosa (strain UCBPP-PA14).